Reading from the N-terminus, the 85-residue chain is Large ribosomal subunit protein bL27 (85 aa).

A disordered region spans residues 1-23; the sequence is MAHKKGQGSTQNNRDSAGRRLGV.

It belongs to the bacterial ribosomal protein bL27 family.

The sequence is that of Large ribosomal subunit protein bL27 from Helicobacter hepaticus (strain ATCC 51449 / 3B1).